We begin with the raw amino-acid sequence, 125 residues long: Glycine cleavage system H protein (125 aa).

Residues 22–104 form the Lipoyl-binding domain; that stretch reads SYIIGITDFA…YDTGWILKLT (83 aa). K63 bears the N6-lipoyllysine mark.

Belongs to the GcvH family. As to quaternary structure, the glycine cleavage system is composed of four proteins: P, T, L and H. The cofactor is (R)-lipoate.

In terms of biological role, the glycine cleavage system catalyzes the degradation of glycine. The H protein shuttles the methylamine group of glycine from the P protein to the T protein. Functionally, is also involved in protein lipoylation via its role as an octanoyl/lipoyl carrier protein intermediate. The chain is Glycine cleavage system H protein from Listeria welshimeri serovar 6b (strain ATCC 35897 / DSM 20650 / CCUG 15529 / CIP 8149 / NCTC 11857 / SLCC 5334 / V8).